Here is a 152-residue protein sequence, read N- to C-terminus: MAKRVQVVLSEDILSLGKDGDLVEVAPGYARNFLLPHGKALPVTPAVLKQVEHRRAKEAERLAALKADAVAFRTALDTIGRFTVKKQTGGDDVLFGTVTNVDVAEAIESATKKLVDKRDITVPEVHRTGNYKVQVKLHPEVVAEINLEVVSH.

Belongs to the bacterial ribosomal protein bL9 family.

Binds to the 23S rRNA. The polypeptide is Large ribosomal subunit protein bL9 (Synechococcus sp. (strain RCC307)).